Here is a 595-residue protein sequence, read N- to C-terminus: Polyadenylate-binding protein-interacting protein 4 (595 aa).

A Sm domain is found at 48–113 (RLVYFTTCKI…SRSEFVRKPP (66 aa)). Composition is skewed to polar residues over residues 302–313 (GGSSTSDGQKPA) and 326–346 (GDSQ…TSKQ). Disordered regions lie at residues 302–505 (GGSS…FYYP) and 536–595 (MYHP…KGRE). Over residues 364–382 (DEQRRKNNEEVSHNNRSAE) the composition is skewed to basic and acidic residues. The segment covering 416–465 (SQVSSKTKSESSFGQSASRSSESRPGPSTSSRPGLSPSSSIGSMASSEKS) has biased composition (low complexity). The short motif at 466-474 (TLNPNAKEF) is the PAM2-like 1; degenerate element. The PAM2-like 2 motif lies at 475 to 485 (KLNPKAKSFKP). 2 stretches are compositionally biased toward low complexity: residues 488 to 501 (SAAA…ADAS) and 548 to 570 (QPQY…PGQQ).

Expressed in cauline leaves, stems, rosette leaves, immature siliques and primary inflorescences.

This Arabidopsis thaliana (Mouse-ear cress) protein is Polyadenylate-binding protein-interacting protein 4 (CID4).